We begin with the raw amino-acid sequence, 475 residues long: Ribulose bisphosphate carboxylase large chain (475 aa).

A propeptide spanning residues 1 to 2 is cleaved from the precursor; the sequence is MS. P3 is subject to N-acetylproline. K14 is subject to N6,N6,N6-trimethyllysine. Positions 123 and 173 each coordinate substrate. K175 functions as the Proton acceptor in the catalytic mechanism. K177 provides a ligand contact to substrate. 3 residues coordinate Mg(2+): K201, D203, and E204. At K201 the chain carries N6-carboxylysine. The active-site Proton acceptor is H294. Substrate contacts are provided by R295, H327, and S379.

The protein belongs to the RuBisCO large chain family. Type I subfamily. In terms of assembly, heterohexadecamer of 8 large chains and 8 small chains; disulfide-linked. The disulfide link is formed within the large subunit homodimers. The cofactor is Mg(2+). The disulfide bond which can form in the large chain dimeric partners within the hexadecamer appears to be associated with oxidative stress and protein turnover.

Its subcellular location is the plastid. The protein localises to the chloroplast. It catalyses the reaction 2 (2R)-3-phosphoglycerate + 2 H(+) = D-ribulose 1,5-bisphosphate + CO2 + H2O. It carries out the reaction D-ribulose 1,5-bisphosphate + O2 = 2-phosphoglycolate + (2R)-3-phosphoglycerate + 2 H(+). Its function is as follows. RuBisCO catalyzes two reactions: the carboxylation of D-ribulose 1,5-bisphosphate, the primary event in carbon dioxide fixation, as well as the oxidative fragmentation of the pentose substrate in the photorespiration process. Both reactions occur simultaneously and in competition at the same active site. The polypeptide is Ribulose bisphosphate carboxylase large chain (Cedrus deodara (Deodar cedar)).